The sequence spans 249 residues: NADH-quinone oxidoreductase subunit C (249 aa).

The protein belongs to the complex I 30 kDa subunit family. In terms of assembly, NDH-1 is composed of 14 different subunits. Subunits NuoB, C, D, E, F, and G constitute the peripheral sector of the complex.

The protein resides in the cell inner membrane. It catalyses the reaction a quinone + NADH + 5 H(+)(in) = a quinol + NAD(+) + 4 H(+)(out). NDH-1 shuttles electrons from NADH, via FMN and iron-sulfur (Fe-S) centers, to quinones in the respiratory chain. The immediate electron acceptor for the enzyme in this species is believed to be ubiquinone. Couples the redox reaction to proton translocation (for every two electrons transferred, four hydrogen ions are translocated across the cytoplasmic membrane), and thus conserves the redox energy in a proton gradient. This Xylella fastidiosa (strain M12) protein is NADH-quinone oxidoreductase subunit C.